Consider the following 274-residue polypeptide: 2-dehydro-3-deoxyphosphooctonate aldolase (274 aa).

This sequence belongs to the KdsA family.

It localises to the cytoplasm. It catalyses the reaction D-arabinose 5-phosphate + phosphoenolpyruvate + H2O = 3-deoxy-alpha-D-manno-2-octulosonate-8-phosphate + phosphate. It participates in carbohydrate biosynthesis; 3-deoxy-D-manno-octulosonate biosynthesis; 3-deoxy-D-manno-octulosonate from D-ribulose 5-phosphate: step 2/3. It functions in the pathway bacterial outer membrane biogenesis; lipopolysaccharide biosynthesis. This Rickettsia conorii (strain ATCC VR-613 / Malish 7) protein is 2-dehydro-3-deoxyphosphooctonate aldolase.